Consider the following 140-residue polypeptide: Myelodysplastic syndrome 2 translocation-associated protein (140 aa).

As to expression, highly expressed in peripheral blood leukocytes, spleen, thymus, kidney, pancreas and lung.

The chain is Myelodysplastic syndrome 2 translocation-associated protein (MDS2) from Homo sapiens (Human).